The following is a 296-amino-acid chain: Light-independent protochlorophyllide reductase iron-sulfur ATP-binding protein (296 aa).

ATP-binding positions include 10-15 (GIGKST) and lysine 39. Serine 14 contacts Mg(2+). [4Fe-4S] cluster is bound by residues cysteine 95 and cysteine 129. 180–181 (NR) serves as a coordination point for ATP.

The protein belongs to the NifH/BchL/ChlL family. Homodimer. Protochlorophyllide reductase is composed of three subunits; ChlL, ChlN and ChlB. It depends on [4Fe-4S] cluster as a cofactor.

Its subcellular location is the plastid. The protein resides in the chloroplast. The catalysed reaction is chlorophyllide a + oxidized 2[4Fe-4S]-[ferredoxin] + 2 ADP + 2 phosphate = protochlorophyllide a + reduced 2[4Fe-4S]-[ferredoxin] + 2 ATP + 2 H2O. Its pathway is porphyrin-containing compound metabolism; chlorophyll biosynthesis (light-independent). Functionally, component of the dark-operative protochlorophyllide reductase (DPOR) that uses Mg-ATP and reduced ferredoxin to reduce ring D of protochlorophyllide (Pchlide) to form chlorophyllide a (Chlide). This reaction is light-independent. The L component serves as a unique electron donor to the NB-component of the complex, and binds Mg-ATP. This is Light-independent protochlorophyllide reductase iron-sulfur ATP-binding protein from Chlorokybus atmophyticus (Soil alga).